We begin with the raw amino-acid sequence, 704 residues long: G-protein coupled receptor-associated protein LMBRD2B (704 aa).

Residues 1–3 (MSG) are Extracellular-facing. Residues 4 to 21 (AALGIEIVVVFFLALFLL) form a helical membrane-spanning segment. The Cytoplasmic portion of the chain corresponds to 22 to 33 (HRYGDFKKQQRM). Residues 34–54 (VLFGTLLAWYLCFLIVFILPL) form a helical membrane-spanning segment. Residues 55–111 (DVSTTIYNQCLIDQEAQTQTPSVSPVLSEQTTANASISPAKSTQRVCYKPWSYIPDG) lie on the Extracellular side of the membrane. N-linked (GlcNAc...) asparagine glycosylation occurs at asparagine 88. The helical transmembrane segment at 112–132 (IMPVFWRVVYWTSQCLTWLLL) threads the bilayer. Residues 133–157 (PFMQSYARSGGFTITGKIKTALIEN) are Cytoplasmic-facing. A helical transmembrane segment spans residues 158–178 (AIYYGTYLFIFGSLLIYVAVH). At 179–192 (PQWHLSWYELQTIG) the chain is on the extracellular side. A helical transmembrane segment spans residues 193–213 (ITAANTWGLFLLVLLLGYGLV). Over 214 to 393 (DIPRSYWEAS…ECLLKQWFYR (180 aa)) the chain is Cytoplasmic. Residues 235–266 (KAAKLMTEKADSEENLEDVMEEVRKINESIKY) are a coiled coil. The helical transmembrane segment at 394–414 (VLAVVLALFSVAVVWSECTFF) threads the bilayer. Residues 415 to 438 (STHPVLSLFAVFIQLAERDYNYLY) lie on the Extracellular side of the membrane. A helical membrane pass occupies residues 439 to 459 (IEMACFITIFFLCTCVYSTVF). The Cytoplasmic segment spans residues 460–481 (RIRVFNYYYLASHHQTDAYSLQ). The helical transmembrane segment at 482-502 (FSGMLFCRLTPPLCLNFLGLI) threads the bilayer. Residues 503-527 (HMDSAISHQAKKQTAYTSIMGSMRV) lie on the Extracellular side of the membrane. A helical membrane pass occupies residues 528 to 548 (LSFIANGFYIYYPMLIVVLCI). Over 549-704 (ATYFSLGTRC…SSRNRIFDDV (156 aa)) the chain is Cytoplasmic. Residues 576 to 612 (DLIDEGRELLRRERRKRQRIEDGENRRREWRERYAQR) are a coiled coil. 2 disordered regions span residues 613–654 (DENA…QSGR) and 672–704 (TLTDDPLQSDTGRHAGGRYLSMSSSRNRIFDDV). The span at 631–654 (YGETLNANTNRQAKYTRSGSQSGR) shows a compositional bias: polar residues.

The protein belongs to the LIMR family.

The protein localises to the cell membrane. Its function is as follows. May associate with G-protein coupled receptors and regulate downstream signaling pathways. This chain is G-protein coupled receptor-associated protein LMBRD2B (lmbrd2b), found in Danio rerio (Zebrafish).